Reading from the N-terminus, the 1188-residue chain is DNA-directed RNA polymerase subunit beta (1188 aa).

Belongs to the RNA polymerase beta chain family. The RNAP catalytic core consists of 2 alpha, 1 beta, 1 beta' and 1 omega subunit. When a sigma factor is associated with the core the holoenzyme is formed, which can initiate transcription.

The enzyme catalyses RNA(n) + a ribonucleoside 5'-triphosphate = RNA(n+1) + diphosphate. DNA-dependent RNA polymerase catalyzes the transcription of DNA into RNA using the four ribonucleoside triphosphates as substrates. In Streptococcus equi subsp. zooepidemicus (strain H70), this protein is DNA-directed RNA polymerase subunit beta.